The primary structure comprises 414 residues: Serine hydroxymethyltransferase (414 aa).

(6S)-5,6,7,8-tetrahydrofolate is bound by residues Leu-116 and 120 to 122; that span reads GHL. N6-(pyridoxal phosphate)lysine is present on Lys-224. (6S)-5,6,7,8-tetrahydrofolate-binding positions include Glu-240 and 348 to 350; that span reads SPF.

This sequence belongs to the SHMT family. In terms of assembly, homodimer. Pyridoxal 5'-phosphate is required as a cofactor.

The protein localises to the cytoplasm. It carries out the reaction (6R)-5,10-methylene-5,6,7,8-tetrahydrofolate + glycine + H2O = (6S)-5,6,7,8-tetrahydrofolate + L-serine. It functions in the pathway one-carbon metabolism; tetrahydrofolate interconversion. The protein operates within amino-acid biosynthesis; glycine biosynthesis; glycine from L-serine: step 1/1. In terms of biological role, catalyzes the reversible interconversion of serine and glycine with tetrahydrofolate (THF) serving as the one-carbon carrier. This reaction serves as the major source of one-carbon groups required for the biosynthesis of purines, thymidylate, methionine, and other important biomolecules. Also exhibits THF-independent aldolase activity toward beta-hydroxyamino acids, producing glycine and aldehydes, via a retro-aldol mechanism. This chain is Serine hydroxymethyltransferase, found in Campylobacter jejuni (strain RM1221).